Consider the following 221-residue polypeptide: Nucleolar protein 3 (221 aa).

Glycine 2 carries N-myristoyl glycine lipidation. The region spanning 4–95 (MQERPSETID…MPDPAWDWQH (92 aa)) is the CARD domain. Residues 20–70 (VETLQADSGLLLDALVARGVLTGPEYEALDALPDAERRVRRLLLLVQSKGE) form an essential for interaction with BAX region. The segment at 107–221 (PPCPGHWTPE…GDESEGCENT (115 aa)) is disordered. The segment covering 132-143 (EEEEIGGPEDSE) has biased composition (acidic residues). Threonine 149 is modified (phosphothreonine; by CK2). 2 stretches are compositionally biased toward acidic residues: residues 165–201 (PDLE…EPEP) and 209–221 (FQEG…CENT).

As to quaternary structure, oligomerizes (via CARD doamin). Interacts (via CARD domain) with CASP2; inhibits CASP2 activity in a phosphorylation-dependent manner. Interacts with CASP8; decreases CASP8 activity in a mitochondria localization- and phosphorylation-dependent manner and this interaction is dissociated by calcium. Interacts with TFPT; translocates NOL3 into the nucleus and negatively regulated TFPT-induced cell death. Interacts directly (via CARD domain) with FAS and FADD (via DED domain); inhibits death-inducing signaling complex (DISC) assembly by inhibiting the increase in FAS-FADD binding induced by FAS activation. Interacts (via CARD domain) with BAX (via a C-terminal 33 residues); inhibits BAX activation and translocation and consequently cytochrome c release from mitochondria. Interacts with PPM1G; may dephosphorylate NOL3. Interacts (via CARD domain) with BBC3 (via BH3 domain); preventing the association of BBC3 with BCL2 and resulting in activation of CASP8. Interacts (via CARD domain) with BAD(via BH3 domain); preventing the association of BAD with BCL2. Interacts directly (via CARD domain) with TNFRSF1A; inhibits TNF-signaling pathway. Phosphorylation at Thr-149 is required for its antiapoptotic effect by blocking death-inducing signaling complex (DISC) activity through the control of interaction with CASP8. Phosphorylation at Thr-149 results in translocation to mitochondria and this translocation enables the binding to CASP8. Dephosphorylated at Thr-149 by calcineurin; doesn't inhibit the association between FADD and CASP8 and the consequent apoptosis. In terms of processing, polyubiquitinated by MDM2; promoting proteasomal-dependent degradation in response to apoptotic stimuli. As to expression, highly expressed in skeletal muscle, heart and medulla.

It localises to the cytoplasm. It is found in the mitochondrion. The protein localises to the sarcoplasmic reticulum. The protein resides in the membrane. Apoptosis repressor that blocks multiple modes of cell death. Inhibits extrinsic apoptotic pathways through two different ways. Firstly by interacting with FAS and FADD upon FAS activation blocking death-inducing signaling complex (DISC) assembly. Secondly by interacting with CASP8 in a mitochondria localization- and phosphorylation-dependent manner, limiting the amount of soluble CASP8 available for DISC-mediated activation. Inhibits intrinsic apoptotic pathway in response to a wide range of stresses, through its interaction with BAX resulting in BAX inactivation, preventing mitochondrial dysfunction and release of pro-apoptotic factors. Inhibits calcium-mediated cell death by functioning as a cytosolic calcium buffer, dissociating its interaction with CASP8 and maintaining calcium homeostasis. Negatively regulates oxidative stress-induced apoptosis by phosphorylation-dependent suppression of the mitochondria-mediated intrinsic pathway, by blocking CASP2 activation and BAX translocation. Negatively regulates hypoxia-induced apoptosis in part by inhibiting the release of cytochrome c from mitochondria in a caspase-independent manner. Also inhibits TNF-induced necrosis by preventing TNF-signaling pathway through TNFRSF1A interaction abrogating the recruitment of RIPK1 to complex I. Finally through its role as apoptosis repressor, promotes vascular remodeling through inhibition of apoptosis and stimulation of proliferation, in response to hypoxia. Inhibits too myoblast differentiation through caspase inhibition. This chain is Nucleolar protein 3 (Nol3), found in Rattus norvegicus (Rat).